Here is a 353-residue protein sequence, read N- to C-terminus: S-adenosylmethionine:tRNA ribosyltransferase-isomerase (353 aa).

It belongs to the QueA family. In terms of assembly, monomer.

It is found in the cytoplasm. The enzyme catalyses 7-aminomethyl-7-carbaguanosine(34) in tRNA + S-adenosyl-L-methionine = epoxyqueuosine(34) in tRNA + adenine + L-methionine + 2 H(+). The protein operates within tRNA modification; tRNA-queuosine biosynthesis. Its function is as follows. Transfers and isomerizes the ribose moiety from AdoMet to the 7-aminomethyl group of 7-deazaguanine (preQ1-tRNA) to give epoxyqueuosine (oQ-tRNA). This chain is S-adenosylmethionine:tRNA ribosyltransferase-isomerase, found in Dinoroseobacter shibae (strain DSM 16493 / NCIMB 14021 / DFL 12).